The following is a 461-amino-acid chain: Major capsid protein (461 aa).

The segment covering 1 to 18 (MSTPTISADTTAQNATST) has biased composition (polar residues). The interval 1-22 (MSTPTISADTTAQNATSTEVRE) is disordered.

It is found in the virion. Its function is as follows. Major protein of the capsid. The sequence is that of Major capsid protein (MCP) from Spodoptera frugiperda ascovirus 1a (SfAV-1a).